A 305-amino-acid chain; its full sequence is Glycine--tRNA ligase alpha subunit (305 aa).

Belongs to the class-II aminoacyl-tRNA synthetase family. Tetramer of two alpha and two beta subunits.

The protein resides in the cytoplasm. It carries out the reaction tRNA(Gly) + glycine + ATP = glycyl-tRNA(Gly) + AMP + diphosphate. This Streptococcus uberis (strain ATCC BAA-854 / 0140J) protein is Glycine--tRNA ligase alpha subunit.